We begin with the raw amino-acid sequence, 621 residues long: UvrABC system protein C (621 aa).

Residues Asn13–Ile92 form the GIY-YIG domain. Positions Arg204–Ile239 constitute a UVR domain.

Belongs to the UvrC family. In terms of assembly, interacts with UvrB in an incision complex.

The protein resides in the cytoplasm. In terms of biological role, the UvrABC repair system catalyzes the recognition and processing of DNA lesions. UvrC both incises the 5' and 3' sides of the lesion. The N-terminal half is responsible for the 3' incision and the C-terminal half is responsible for the 5' incision. In Clostridium beijerinckii (strain ATCC 51743 / NCIMB 8052) (Clostridium acetobutylicum), this protein is UvrABC system protein C.